A 106-amino-acid chain; its full sequence is Protein U4 (106 aa).

Residues 5-25 traverse the membrane as a helical segment; that stretch reads FFISIILFVVLLNPSLIINMV.

It belongs to the nanovirus U4 protein family.

It is found in the membrane. The chain is Protein U4 (DNA-U4) from Cicer arietinum (Chickpea).